The sequence spans 376 residues: Queuine tRNA-ribosyltransferase (376 aa).

The active-site Proton acceptor is the Asp89. Substrate contacts are provided by residues 89–93 (DSGGF), Asp143, Gln194, and Gly221. The tract at residues 252–258 (GVGTPAN) is RNA binding. The active-site Nucleophile is Asp271. Zn(2+) contacts are provided by Cys309, Cys311, Cys314, and His340.

It belongs to the queuine tRNA-ribosyltransferase family. In terms of assembly, homodimer. Within each dimer, one monomer is responsible for RNA recognition and catalysis, while the other monomer binds to the replacement base PreQ1. Requires Zn(2+) as cofactor.

It catalyses the reaction 7-aminomethyl-7-carbaguanine + guanosine(34) in tRNA = 7-aminomethyl-7-carbaguanosine(34) in tRNA + guanine. It participates in tRNA modification; tRNA-queuosine biosynthesis. Catalyzes the base-exchange of a guanine (G) residue with the queuine precursor 7-aminomethyl-7-deazaguanine (PreQ1) at position 34 (anticodon wobble position) in tRNAs with GU(N) anticodons (tRNA-Asp, -Asn, -His and -Tyr). Catalysis occurs through a double-displacement mechanism. The nucleophile active site attacks the C1' of nucleotide 34 to detach the guanine base from the RNA, forming a covalent enzyme-RNA intermediate. The proton acceptor active site deprotonates the incoming PreQ1, allowing a nucleophilic attack on the C1' of the ribose to form the product. After dissociation, two additional enzymatic reactions on the tRNA convert PreQ1 to queuine (Q), resulting in the hypermodified nucleoside queuosine (7-(((4,5-cis-dihydroxy-2-cyclopenten-1-yl)amino)methyl)-7-deazaguanosine). The protein is Queuine tRNA-ribosyltransferase of Clostridium kluyveri (strain NBRC 12016).